Consider the following 73-residue polypeptide: uncharacterized protein (73 aa).

A signal peptide spans 1–23; the sequence is MLHLIKMVSKIVLLITLVFIVSA.

This is an uncharacterized protein from Acheta domesticus (House cricket).